Here is a 555-residue protein sequence, read N- to C-terminus: Sulfite reductase [ferredoxin] (555 aa).

Residues 1–22 (MTTARPAKARNEGQWALGHREP) form a disordered region. A cross-link (3'-(S-cysteinyl)-tyrosine (Tyr-Cys)) is located at residues 69–161 (YTQREQGYDG…DVGLQTTEAC (93 aa)). Residues Cys-417, Cys-423, Cys-463, and Cys-467 each coordinate [4Fe-4S] cluster. Cys-467 is a siroheme binding site.

It belongs to the nitrite and sulfite reductase 4Fe-4S domain family. Monomer. It depends on siroheme as a cofactor. Requires [4Fe-4S] cluster as cofactor.

It carries out the reaction hydrogen sulfide + 6 oxidized [2Fe-2S]-[ferredoxin] + 3 H2O = sulfite + 6 reduced [2Fe-2S]-[ferredoxin] + 7 H(+). Its function is as follows. Catalyzes the reduction of sulfite to sulfide, a step in the biosynthesis of sulfur-containing amino acids and cofactors. The protein is Sulfite reductase [ferredoxin] (sir) of Mycobacterium bovis (strain ATCC BAA-935 / AF2122/97).